Reading from the N-terminus, the 369-residue chain is Chorismate synthase (369 aa).

2 residues coordinate NADP(+): R48 and R54. FMN-binding positions include 125–127 (RSS), 238–239 (NA), G278, 293–297 (KPTSS), and R319.

This sequence belongs to the chorismate synthase family. As to quaternary structure, homotetramer. Requires FMNH2 as cofactor.

The catalysed reaction is 5-O-(1-carboxyvinyl)-3-phosphoshikimate = chorismate + phosphate. The protein operates within metabolic intermediate biosynthesis; chorismate biosynthesis; chorismate from D-erythrose 4-phosphate and phosphoenolpyruvate: step 7/7. Catalyzes the anti-1,4-elimination of the C-3 phosphate and the C-6 proR hydrogen from 5-enolpyruvylshikimate-3-phosphate (EPSP) to yield chorismate, which is the branch point compound that serves as the starting substrate for the three terminal pathways of aromatic amino acid biosynthesis. This reaction introduces a second double bond into the aromatic ring system. This is Chorismate synthase from Cupriavidus metallidurans (strain ATCC 43123 / DSM 2839 / NBRC 102507 / CH34) (Ralstonia metallidurans).